Consider the following 898-residue polypeptide: Pyruvate, phosphate dikinase (898 aa).

Residues 1 to 355 (MAKWVYTFGA…LWMLQTRSGK (355 aa)) form an N-terminal region. An ATP-binding site is contributed by Arg-96. The linker 1 stretch occupies residues 356–412 (RTAKSALKIAVDMAEEGLISKEEAVARIDPASLDQLLHPTIDPHARRDIIGSGLPAS). The segment at 413 to 511 (PGAATGEIVF…TLRKGDVITI (99 aa)) is central. Phosphothreonine; by PDRP1 is present on Thr-466. The active-site Tele-phosphohistidine intermediate is the His-468. The segment at 512–546 (DGSSGQVLKGEIPMLQPELSGDFGKIMQWADASRR) is linker 2. Residues 547 to 898 (MTVRTNAETP…VAEVQALAAS (352 aa)) form a C-terminal region. Positions 574, 630, 758, 779, 780, 781, and 782 each coordinate substrate. Residue Glu-758 participates in Mg(2+) binding. Mg(2+) is bound at residue Asp-782. Cys-844 acts as the Proton donor in catalysis.

Belongs to the PEP-utilizing enzyme family. As to quaternary structure, homodimer. The cofactor is Mg(2+). In terms of processing, phosphorylation of Thr-466 in the dark inactivates the enzyme. Dephosphorylation upon light stimulation reactivates the enzyme.

The enzyme catalyses pyruvate + phosphate + ATP = phosphoenolpyruvate + AMP + diphosphate + H(+). With respect to regulation, activated by light-induced dephosphorylation. Inhibited by dark-induced phosphorylation. Both reactions are catalyzed by PDRP1. Functionally, catalyzes the reversible phosphorylation of pyruvate and phosphate. In Rhizobium meliloti (strain 1021) (Ensifer meliloti), this protein is Pyruvate, phosphate dikinase (ppdK).